The sequence spans 385 residues: Sulfoquinovose monooxygenase (385 aa).

Residues 366 to 385 (AYGRVPSETPATPLGNGERH) are disordered.

The protein belongs to the SsuD family. Homodimer.

The catalysed reaction is 6-sulfo-D-quinovose + FMNH2 + O2 = 6-dehydro-D-glucose + FMN + sulfite + H2O + 2 H(+). In terms of biological role, part of the sulfoquinovose monooxygenase (sulfo-SMO) pathway, a D-sulfoquinovose degradation pathway that enables the complete utilization of all carbons within sulfoquinovose (SQ) with concomitant production of inorganic sulfite. Catalyzes the oxidative desulfurization of sulfoquinovose to sulfite and 6-dehydro-D-glucose. Is highly specific for sulfoquinovose and cannot use sulfoquinovosyl glycerol. FMNH(2) is provided by the FMN reductase SmoA. In Agrobacterium fabrum (strain C58 / ATCC 33970) (Agrobacterium tumefaciens (strain C58)), this protein is Sulfoquinovose monooxygenase.